Here is a 330-residue protein sequence, read N- to C-terminus: G-protein coupled receptor 157 (330 aa).

The Extracellular segment spans residues 1-15 (MPTPAPPTELLPWER). A helical membrane pass occupies residues 16 to 36 (AVVLLSCVLSALGSGLLVATH). The Cytoplasmic portion of the chain corresponds to 37 to 48 (ALWPDLRSRARR). The chain crosses the membrane as a helical span at residues 49-69 (LLLFLSLADLLSAASYFYGVL). At 70-87 (QDFAGTSWDCVLQGALST) the chain is on the extracellular side. A helical transmembrane segment spans residues 88 to 108 (FANTSSFFWTVAIALYLYLNI). The Cytoplasmic segment spans residues 109–119 (VRATRGPCTDH). The chain crosses the membrane as a helical span at residues 120–140 (LVWAFHLISWGVPLAITVAAV). Residues 141–166 (CLKKIGYDASDVSVGWCWINLEAEDR) lie on the Extracellular side of the membrane. A helical membrane pass occupies residues 167–187 (VLWMLLTGKLWEMLAYILLPL). Topologically, residues 188–227 (LYLLVRKHINRAHQALSEYRPIWEGRQLQRGSPTSMADKK) are cytoplasmic. The chain crosses the membrane as a helical span at residues 228–250 (LILIPFIFICLRVWSTVRFVLTL). Topologically, residues 251-259 (CGSPVVQAP) are extracellular. A helical transmembrane segment spans residues 260 to 282 (VLVVLHGIGNTFQGGANCIMFVL). The Cytoplasmic segment spans residues 283–330 (CTRAVRTRLFSLCCCYPRPPTQNPPGASIPPKMGESQESRRTPEVPST). The tract at residues 303-330 (TQNPPGASIPPKMGESQESRRTPEVPST) is disordered. Residues 317-330 (ESQESRRTPEVPST) show a composition bias toward basic and acidic residues.

It belongs to the G-protein coupled receptor 2 family.

It is found in the cell projection. The protein resides in the cilium membrane. In terms of biological role, orphan receptor that promotes neuronal differentiation of radial glial progenitors (RGPs). The activity of this receptor is mediated by a G(q)-protein that activates a phosphatidylinositol-calcium second messenger. The protein is G-protein coupled receptor 157 (Gpr157) of Rattus norvegicus (Rat).